The primary structure comprises 303 residues: D-alanine--D-alanine ligase (303 aa).

The 197-residue stretch at 102 to 298 (RILLAAAGLP…YPELCDWMVR (197 aa)) folds into the ATP-grasp domain. An ATP-binding site is contributed by 128 to 181 (PLPAPYVIKPVAEGSSVGVEIVRTGDNRRAEIARTWRFGKEALVESFIPGRELT). Mg(2+) contacts are provided by Asp251, Glu265, and Asn267.

It belongs to the D-alanine--D-alanine ligase family. The cofactor is Mg(2+). Requires Mn(2+) as cofactor.

It is found in the cytoplasm. It carries out the reaction 2 D-alanine + ATP = D-alanyl-D-alanine + ADP + phosphate + H(+). The protein operates within cell wall biogenesis; peptidoglycan biosynthesis. Functionally, cell wall formation. This chain is D-alanine--D-alanine ligase, found in Gluconobacter oxydans (strain 621H) (Gluconobacter suboxydans).